The sequence spans 752 residues: Peptidyl-prolyl cis-trans isomerase G (752 aa).

In terms of domain architecture, PPIase cyclophilin-type spans 11–176; it reads FFDIAINNQP…AEVRILSCGE (166 aa). Residues 182–193 show a composition bias toward basic residues; that stretch reads KVKKEEKKRHKS. The segment at 182-752 is disordered; that stretch reads KVKKEEKKRH…SPGTDEDKSG (571 aa). The segment covering 194–214 has biased composition (low complexity); sequence SSSSSSSDSDSSSDSQSSSDS. Residues 226 to 251 show a composition bias toward basic residues; it reads RKRKKKHRKNSRKHKKEKKKRKKSKK. Residues Ser-252, Ser-254, Ser-255, Ser-257, and Ser-288 each carry the phosphoserine modification. Over residues 290 to 308 the composition is skewed to basic and acidic residues; sequence PKADDKERKNREREREREC. The residue at position 313 (Ser-313) is a Phosphoserine. Basic residues predominate over residues 327 to 345; that stretch reads FGRKIKGRGPRRYRTPSRS. 2 stretches are compositionally biased toward basic and acidic residues: residues 346–366 and 377–447; these read RSRD…EMQR and RWIK…DKYN. Residue Ser-354 is modified to Phosphoserine. Thr-356 is modified (phosphothreonine). Ser-384 carries the phosphoserine modification. Residue Lys-390 forms a Glycyl lysine isopeptide (Lys-Gly) (interchain with G-Cter in SUMO2) linkage. A phosphoserine mark is found at Ser-395, Ser-411, and Ser-413. The segment covering 448 to 461 has biased composition (basic residues); that stretch reads KNKVKKRGKSKSRS. 2 stretches are compositionally biased toward basic and acidic residues: residues 462-552 and 577-598; these read KSKE…DLTK and RSHD…QEYR. The segment covering 599-625 has biased composition (basic residues); sequence RRGRSRSRDRRTPGRSRSKDRRRRRRD. Residues 626 to 682 show a composition bias toward basic and acidic residues; that stretch reads SRSSEREESQSRNKEKYRSQDSKSSHRKENSEGEKRMYSKSRDHSSSNNNREKKADI. Phosphoserine occurs at positions 685 and 688. A compositionally biased stretch (polar residues) spans 685–705; sequence SPVSKTKQSSQDNEVKSSTLK. Lys-691 is covalently cross-linked (Glycyl lysine isopeptide (Lys-Gly) (interchain with G-Cter in SUMO2)). Phosphoserine occurs at positions 694, 742, and 743. The span at 706–752 shows a compositional bias: basic and acidic residues; sequence NQEDEKTRSPVEKENQKSKGQENDHVHDKNKKCDHESSPGTDEDKSG. Phosphothreonine is present on Thr-746. Ser-751 bears the Phosphoserine mark.

As to quaternary structure, interacts with CLK1, PNN and with the phosphorylated C-terminal domain of RNA polymerase II.

Its subcellular location is the nucleus matrix. The protein resides in the nucleus speckle. The catalysed reaction is [protein]-peptidylproline (omega=180) = [protein]-peptidylproline (omega=0). Inhibited by cyclosporin A (CsA). In terms of biological role, PPIase that catalyzes the cis-trans isomerization of proline imidic peptide bonds in oligopeptides and may therefore assist protein folding. May be implicated in the folding, transport, and assembly of proteins. May play an important role in the regulation of pre-mRNA splicing. The sequence is that of Peptidyl-prolyl cis-trans isomerase G (Ppig) from Rattus norvegicus (Rat).